Here is a 644-residue protein sequence, read N- to C-terminus: Exoribonuclease 2 (644 aa).

The RNB domain maps to 189-516 (REDLTALDFV…NHRLLKAVIK (328 aa)). The region spanning 561–643 (DTRFAAEIVD…ETRSIIARPV (83 aa)) is the S1 motif domain.

It belongs to the RNR ribonuclease family. RNase II subfamily.

The protein resides in the cytoplasm. It carries out the reaction Exonucleolytic cleavage in the 3'- to 5'-direction to yield nucleoside 5'-phosphates.. Involved in mRNA degradation. Hydrolyzes single-stranded polyribonucleotides processively in the 3' to 5' direction. The polypeptide is Exoribonuclease 2 (Escherichia coli O17:K52:H18 (strain UMN026 / ExPEC)).